The following is a 339-amino-acid chain: Dual specificity protein phosphatase 12 (339 aa).

Position 1 is an N-acetylmethionine (methionine 1). Residues 1-22 (MLEVQSSNHGCERQAPTTSPAS) are compositionally biased toward polar residues. The disordered stretch occupies residues 1–25 (MLEVQSSNHGCERQAPTTSPASSAG). In terms of domain architecture, Tyrosine-protein phosphatase spans 26–170 (HAVEVRPGLY…LKLYEAMGHE (145 aa)). The active-site Phosphocysteine intermediate is the cysteine 114. 115 to 120 (HAGVSR) lines the substrate pocket. The residue at position 334 (serine 334) is a Phosphoserine.

This sequence belongs to the protein-tyrosine phosphatase family. Non-receptor class dual specificity subfamily. In terms of assembly, monomer. Zn(2+) is required as a cofactor.

It is found in the nucleus. Its subcellular location is the cytoplasm. The protein localises to the cytosol. The catalysed reaction is O-phospho-L-tyrosyl-[protein] + H2O = L-tyrosyl-[protein] + phosphate. It carries out the reaction O-phospho-L-seryl-[protein] + H2O = L-seryl-[protein] + phosphate. The enzyme catalyses O-phospho-L-threonyl-[protein] + H2O = L-threonyl-[protein] + phosphate. Its function is as follows. Dual specificity phosphatase; can dephosphorylate both phosphotyrosine and phosphoserine or phosphothreonine residues. Can dephosphorylate glucokinase (in vitro). Has phosphatase activity with the synthetic substrate 6,8-difluoro-4-methylumbelliferyl phosphate and other in vitro substrates. This is Dual specificity protein phosphatase 12 (Dusp12) from Rattus norvegicus (Rat).